The primary structure comprises 77 residues: Mu-conotoxin BuIIIA (77 aa).

An N-terminal signal peptide occupies residues 1–22 (MMSKLGVLLTICLLLFPLFALP). The propeptide occupies 23–51 (QDGDQPADRPAERMQDDISSEQNSLLEKR). The segment at 26–46 (DQPADRPAERMQDDISSEQNS) is disordered. A compositionally biased stretch (basic and acidic residues) spans 28–38 (PADRPAERMQD). Disulfide bonds link C56–C67, C57–C73, and C63–C74. A Cysteine amide modification is found at C74.

This sequence belongs to the conotoxin M superfamily. Expressed by the venom duct.

The protein resides in the secreted. Its function is as follows. Mu-conotoxins block voltage-gated sodium channels (Nav). This synthetic toxin potently blocks rNav1.2/SCN2A, and rNav1.4/SCN4A. It also moderately blocks rNav1.1/SCN1A, rNav1.3/SCN3A, rNav1.5/SCN5A, and mNav1.6/SCN8A. The inhibition is reversible. This is Mu-conotoxin BuIIIA from Conus bullatus (Bubble cone).